The primary structure comprises 364 residues: DNA polymerase IV (364 aa).

The UmuC domain occupies 14-198 (IIHIDMDAFF…LPVEKFHGVG (185 aa)). Residues Asp18 and Asp116 each contribute to the Mg(2+) site. The active site involves Glu117.

It belongs to the DNA polymerase type-Y family. In terms of assembly, monomer. It depends on Mg(2+) as a cofactor.

The protein localises to the cytoplasm. The enzyme catalyses DNA(n) + a 2'-deoxyribonucleoside 5'-triphosphate = DNA(n+1) + diphosphate. Poorly processive, error-prone DNA polymerase involved in untargeted mutagenesis. Copies undamaged DNA at stalled replication forks, which arise in vivo from mismatched or misaligned primer ends. These misaligned primers can be extended by PolIV. Exhibits no 3'-5' exonuclease (proofreading) activity. May be involved in translesional synthesis, in conjunction with the beta clamp from PolIII. This is DNA polymerase IV from Lactococcus lactis subsp. cremoris (strain MG1363).